The sequence spans 489 residues: MSVYGLQRLYIGGGYVDATSGKTFDTFDPATGELLAQVQQASAADVDRAVASAQEGQREWAAMTAMQRSRILRRAVDLLRERNDELAAIETRDTGKPIGETLAVDIVTGADVIEYYAGLATAIEGLQVPLRAESFVYTRREPLGVCAGIGAWNYPIQIACWKTAPALAAGNAMVFKPSEVTPLTALKLAEIYTEAGVPAGVFNVVQGDGSVGALLTGHPDIAKVSFTGGVETGKKVMSLAGASSLKEVTMELGGKSPLIVFDDADLDRAADIAVTANFFSSGQVCTNGTRVFMHRSVKDAFTQKVLERVKRIRVGKPTDADTNFGPLVSAAQLDKVLGFIESGKAEGAKLLAGGTRLTDGHFGSGQYVAPTVFGDCRDDMKIVREEIFGPVMSILDFESEDEVIARANDTHYGLAAGVVTENLSRAHRTIHRLEAGICWINTWGESPAEMPVGGYKQSGVGRENGITTLEHYTRIKSVQVELGRYNPVF.

K(+) is bound by residues Thr26 and Asp93. NAD(+) is bound at residue 150-152; the sequence is GAW. Lys162 (charge relay system) is an active-site residue. An NAD(+)-binding site is contributed by 176 to 179; it reads KPSE. Val180 is a K(+) binding site. 229 to 232 provides a ligand contact to NAD(+); it reads GVET. Leu245 is a binding site for K(+). Glu251 (proton acceptor) is an active-site residue. Residues Gly253, Cys285, and Glu386 each contribute to the NAD(+) site. Catalysis depends on Cys285, which acts as the Nucleophile. At Cys285 the chain carries Cysteine sulfenic acid (-SOH). The K(+) site is built by Lys456 and Gly459. Glu463 (charge relay system) is an active-site residue.

It belongs to the aldehyde dehydrogenase family. As to quaternary structure, dimer of dimers. The cofactor is K(+).

The catalysed reaction is betaine aldehyde + NAD(+) + H2O = glycine betaine + NADH + 2 H(+). Its pathway is amine and polyamine biosynthesis; betaine biosynthesis via choline pathway; betaine from betaine aldehyde: step 1/1. Functionally, involved in the biosynthesis of the osmoprotectant glycine betaine. Catalyzes the irreversible oxidation of betaine aldehyde to the corresponding acid. The polypeptide is Betaine aldehyde dehydrogenase (Burkholderia cenocepacia (strain ATCC BAA-245 / DSM 16553 / LMG 16656 / NCTC 13227 / J2315 / CF5610) (Burkholderia cepacia (strain J2315))).